A 971-amino-acid chain; its full sequence is Piwi-like protein 2 (971 aa).

A Symmetric dimethylarginine modification is found at arginine 45. Arginine 74 carries the post-translational modification Omega-N-methylarginine; by PRMT5; alternate. Arginine 74 is subject to Symmetric dimethylarginine; by PRMT5; alternate. An Omega-N-methylarginine; alternate modification is found at arginine 83. A symmetric dimethylarginine; alternate mark is found at arginine 83 and arginine 95. Residue arginine 95 is modified to Omega-N-methylarginine; by PRMT5; alternate. Position 100 is a symmetric dimethylarginine; by PRMT5; alternate (arginine 100). Arginine 100 carries the post-translational modification Omega-N-methylarginine; alternate. Residues 102 to 124 form a disordered region; the sequence is LSANMVRKDREEPRSSLPDPSVL. 2 positions are modified to symmetric dimethylarginine: arginine 144 and arginine 156. The interval 159 to 200 is disordered; the sequence is SSIGRGMDKPPSAFGLTARDPPRLPQPPALSPTSLHSADPPP. The residue at position 163 (arginine 163) is a Symmetric dimethylarginine; by PRMT5. Positions 387 to 500 constitute a PAZ domain; it reads SVLDVMHAIY…LLPELSFMTG (114 aa). Arginine 549 bears the Symmetric dimethylarginine; by PRMT5 mark. One can recognise a Piwi domain in the interval 666-957; that stretch reads MVVCIIMGTR…LAFLSGQILH (292 aa). Residues aspartate 743, glutamate 781, aspartate 813, and histidine 946 contribute to the active site.

This sequence belongs to the argonaute family. Piwi subfamily. Interacts with DDX4, MAEL, EIF3A, EIF4E, EIF4G, PRMT5 and WDR77. Associates with EIF4E- and EIF4G-containing m7G cap-binding complexes. Interacts (when methylated on arginine residues) with TDRD1 and TDRKH/TDRD2. Interacts with TDRD12. Component of the PET complex, at least composed of EXD1, PIWIL2, TDRD12 and piRNAs. Interacts with MOV10L1. Interacts with GPAT2. Interacts with Tex19.1 and, probably, Tex19.2. Interacts (via PIWI domain) with BMAL1 and CLOCK. Interacts with GSK3B. Interacts with TEX15. Requires Mg(2+) as cofactor. Post-translationally, arginine methylation by PRMT5 is required for the interaction with Tudor domain-containing protein TDRD1 and subsequent localization to the meiotic nuage, also named P granule. In terms of tissue distribution, expressed in adult testis, specifically in spermatocytes and in spermatogonia. Only detected in primordial germ cells of both sexes. Widely expressed in tumors. Also present at early stages of oocyte growth. Present in the mitotic spermatogonia. Not detected in the first stages of meiosis (preleptotene and leptotene). Detected at the late zygotene stage and increases throughout pachytene, declining from this stage onward until expression stops at the early round spermatid stage (at protein level).

The protein resides in the cytoplasm. Functionally, endoribonuclease that plays a central role during spermatogenesis by repressing transposable elements and preventing their mobilization, which is essential for the germline integrity. Plays an essential role in meiotic differentiation of spermatocytes, germ cell differentiation and in self-renewal of spermatogonial stem cells. Its presence in oocytes suggests that it may participate in similar functions during oogenesis in females. Acts via the piRNA metabolic process, which mediates the repression of transposable elements during meiosis by forming complexes composed of piRNAs and Piwi proteins and govern the methylation and subsequent repression of transposons. During piRNA biosynthesis, plays a key role in the piRNA amplification loop, also named ping-pong amplification cycle, by acting as a 'slicer-competent' piRNA endoribonuclease that cleaves primary piRNAs, which are then loaded onto 'slicer-incompetent' PIWIL4. PIWIL2 slicing produces a pre-miRNA intermediate, which is then processed in mature piRNAs, and as well as a 16 nucleotide by-product that is degraded. Required for PIWIL4/MIWI2 nuclear localization and association with secondary piRNAs antisense. Besides their function in transposable elements repression, piRNAs are probably involved in other processes during meiosis such as translation regulation. Indirectly modulates expression of genes such as PDGFRB, SLC2A1, ITGA6, GJA7, THY1, CD9 and STRA8. Represses circadian rhythms by promoting the stability and activity of core clock components BMAL1 and CLOCK by inhibiting GSK3B-mediated phosphorylation and ubiquitination-dependent degradation of these proteins. In Mus musculus (Mouse), this protein is Piwi-like protein 2.